Reading from the N-terminus, the 90-residue chain is MKTAIFTVVLALAVFAVLSFGWEANEKALSEEFTELIHEKEAASETEARECRYFWGECHDHMPCCDWLVCRYKWLITYNICVWNRTFPEK.

The first 19 residues, 1–19, serve as a signal peptide directing secretion; the sequence is MKTAIFTVVLALAVFAVLS. A propeptide spanning residues 20 to 50 is cleaved from the precursor; the sequence is FGWEANEKALSEEFTELIHEKEAASETEARE. 3 disulfides stabilise this stretch: Cys-51–Cys-65, Cys-58–Cys-70, and Cys-64–Cys-81.

Belongs to the neurotoxin 10 (Hwtx-1) family. 13 (Hntx-13) subfamily. As to expression, expressed by the venom gland.

It is found in the secreted. Its function is as follows. Ion channel inhibitor. This is U7-theraphotoxin-Hhn1j from Cyriopagopus hainanus (Chinese bird spider).